Reading from the N-terminus, the 211-residue chain is Prolactin-3C1 (211 aa).

Positions 1 to 29 (MQLSLTQARTWKGLLLLVSCMILWISVTP) are cleaved as a signal peptide. Residues asparagine 77 and asparagine 173 are each glycosylated (N-linked (GlcNAc...) asparagine). Cysteine 80 and cysteine 187 are joined by a disulfide.

Belongs to the somatotropin/prolactin family. As to expression, expressed exclusively in decidual tissue.

Its subcellular location is the secreted. The polypeptide is Prolactin-3C1 (Prl3c1) (Rattus norvegicus (Rat)).